Here is a 657-residue protein sequence, read N- to C-terminus: uncharacterized protein (657 aa).

A signal peptide spans 1–26 (MFGKGLVKKSLLFFSGVSTMAVFLVS). Residue Cys-27 is the site of N-palmitoyl cysteine attachment. Cys-27 carries S-diacylglycerol cysteine lipidation. 3 disordered regions span residues 291–316 (ISPK…FSST), 468–496 (RLSS…DGII), and 516–563 (KSMT…KETN). The segment covering 294 to 304 (KQGSDNNSNLS) has biased composition (polar residues). Over residues 469–495 (LSSDDTNTKKALKEVSTHKNGSDKDGI) the composition is skewed to basic and acidic residues. The segment covering 516–525 (KSMTDNNSGT) has biased composition (polar residues). The span at 526–545 (EQKKNLSEVDTKKKEKESKG) shows a compositional bias: basic and acidic residues. A compositionally biased stretch (low complexity) spans 546 to 559 (KTQSNGQDSGQQNG).

To T.pallidum TmpC.

The protein localises to the cell membrane. This is an uncharacterized protein from Mycoplasma pneumoniae (strain ATCC 29342 / M129 / Subtype 1) (Mycoplasmoides pneumoniae).